We begin with the raw amino-acid sequence, 453 residues long: Phosphoglucosamine mutase (453 aa).

The active-site Phosphoserine intermediate is the serine 109. Residues serine 109, aspartate 246, aspartate 248, and aspartate 250 each contribute to the Mg(2+) site. Residue serine 109 is modified to Phosphoserine.

It belongs to the phosphohexose mutase family. It depends on Mg(2+) as a cofactor. Activated by phosphorylation.

It catalyses the reaction alpha-D-glucosamine 1-phosphate = D-glucosamine 6-phosphate. In terms of biological role, catalyzes the conversion of glucosamine-6-phosphate to glucosamine-1-phosphate. The chain is Phosphoglucosamine mutase from Leifsonia xyli subsp. xyli (strain CTCB07).